We begin with the raw amino-acid sequence, 321 residues long: Aspartate carbamoyltransferase catalytic subunit (321 aa).

Positions 65 and 66 each coordinate carbamoyl phosphate. Lys-93 serves as a coordination point for L-aspartate. Carbamoyl phosphate-binding residues include Arg-115, His-143, and Gln-146. L-aspartate contacts are provided by Arg-176 and Arg-230. Gly-271 and Pro-272 together coordinate carbamoyl phosphate.

This sequence belongs to the aspartate/ornithine carbamoyltransferase superfamily. ATCase family. In terms of assembly, heterododecamer (2C3:3R2) of six catalytic PyrB chains organized as two trimers (C3), and six regulatory PyrI chains organized as three dimers (R2).

It carries out the reaction carbamoyl phosphate + L-aspartate = N-carbamoyl-L-aspartate + phosphate + H(+). The protein operates within pyrimidine metabolism; UMP biosynthesis via de novo pathway; (S)-dihydroorotate from bicarbonate: step 2/3. Functionally, catalyzes the condensation of carbamoyl phosphate and aspartate to form carbamoyl aspartate and inorganic phosphate, the committed step in the de novo pyrimidine nucleotide biosynthesis pathway. The polypeptide is Aspartate carbamoyltransferase catalytic subunit (Bartonella bacilliformis (strain ATCC 35685 / KC583 / Herrer 020/F12,63)).